Consider the following 293-residue polypeptide: 4-hydroxy-tetrahydrodipicolinate synthase (293 aa).

Thr47 serves as a coordination point for pyruvate. The active-site Proton donor/acceptor is Tyr136. The Schiff-base intermediate with substrate role is filled by Lys164. Pyruvate is bound at residue Ile206.

The protein belongs to the DapA family. Homotetramer; dimer of dimers.

Its subcellular location is the cytoplasm. The enzyme catalyses L-aspartate 4-semialdehyde + pyruvate = (2S,4S)-4-hydroxy-2,3,4,5-tetrahydrodipicolinate + H2O + H(+). Its pathway is amino-acid biosynthesis; L-lysine biosynthesis via DAP pathway; (S)-tetrahydrodipicolinate from L-aspartate: step 3/4. In terms of biological role, catalyzes the condensation of (S)-aspartate-beta-semialdehyde [(S)-ASA] and pyruvate to 4-hydroxy-tetrahydrodipicolinate (HTPA). This chain is 4-hydroxy-tetrahydrodipicolinate synthase, found in Listeria monocytogenes serotype 4b (strain CLIP80459).